The primary structure comprises 357 residues: Ribosomal RNA large subunit methyltransferase M (357 aa).

S-adenosyl-L-methionine is bound by residues S190, 223–226, D242, D262, and D278; that span reads APGG. K307 functions as the Proton acceptor in the catalytic mechanism.

The protein belongs to the class I-like SAM-binding methyltransferase superfamily. RNA methyltransferase RlmE family. RlmM subfamily. In terms of assembly, monomer.

The protein resides in the cytoplasm. It carries out the reaction cytidine(2498) in 23S rRNA + S-adenosyl-L-methionine = 2'-O-methylcytidine(2498) in 23S rRNA + S-adenosyl-L-homocysteine + H(+). Catalyzes the 2'-O-methylation at nucleotide C2498 in 23S rRNA. This Chromohalobacter salexigens (strain ATCC BAA-138 / DSM 3043 / CIP 106854 / NCIMB 13768 / 1H11) protein is Ribosomal RNA large subunit methyltransferase M.